The sequence spans 342 residues: Cyclin pch1 (342 aa).

Residues 261 to 342 (LPIDQKNGSH…TDKEMETEAS (82 aa)) are disordered. Residues 278–314 (TPSSLASVSTQATPQHQNSSGRTDSFHSLNTETPSKS) are compositionally biased toward polar residues. Position 300 is a phosphothreonine (threonine 300). Residue serine 302 is modified to Phosphoserine. A compositionally biased stretch (basic and acidic residues) spans 329–342 (KSSDTDKEMETEAS).

It belongs to the cyclin family. Cyclin C subfamily. Interacts with cdc2 protein kinase and with the N-terminal domain of cdk9.

The protein resides in the nucleus. Essential for progression through the whole cell cycle. This is Cyclin pch1 (pch1) from Schizosaccharomyces pombe (strain 972 / ATCC 24843) (Fission yeast).